Consider the following 168-residue polypeptide: Protein DESIGUAL 2 (168 aa).

The first 20 residues, 1 to 20 (MARNVGFFICILILAMDVSA), serve as a signal peptide directing secretion. The next 3 helical transmembrane spans lie at 56 to 76 (LAAC…GGCL), 94 to 114 (AVAS…MLIV), and 133 to 153 (VLSI…AYYI).

This sequence belongs to the DESIGUAL family. In terms of tissue distribution, mainly expressed in roots, inflorescences and developing leaves, and, at low levels, in mature leaves.

Its subcellular location is the endoplasmic reticulum membrane. Involved, partially redundantly with VCC/DEAL1 and DEAL3, to ensure bilateral symmetry development and early leaf margin patterning, probably via the regulation of auxin and CUC2 distribution. In Arabidopsis thaliana (Mouse-ear cress), this protein is Protein DESIGUAL 2.